Reading from the N-terminus, the 143-residue chain is Ribosome-binding factor A (143 aa).

Positions aspartate 117–glutamate 143 are disordered. The span at aspartate 134 to glutamate 143 shows a compositional bias: basic and acidic residues.

Belongs to the RbfA family. Monomer. Binds 30S ribosomal subunits, but not 50S ribosomal subunits or 70S ribosomes.

Its subcellular location is the cytoplasm. In terms of biological role, one of several proteins that assist in the late maturation steps of the functional core of the 30S ribosomal subunit. Associates with free 30S ribosomal subunits (but not with 30S subunits that are part of 70S ribosomes or polysomes). Required for efficient processing of 16S rRNA. May interact with the 5'-terminal helix region of 16S rRNA. The polypeptide is Ribosome-binding factor A (Cutibacterium acnes (strain DSM 16379 / KPA171202) (Propionibacterium acnes)).